The sequence spans 800 residues: Ent-copalyl diphosphate synthase 2, chloroplastic (800 aa).

The N-terminal 47 residues, 1 to 47 (MQMQVLTAASSLPRATLLRPAAAEPWRQSFLQLQARPIQRPGIMLHC), are a transit peptide targeting the chloroplast. Residues 52 to 80 (QGQETRERRQLDDDEHARPPQGGDDDVAA) are disordered. Residues 55 to 69 (ETRERRQLDDDEHAR) show a composition bias toward basic and acidic residues. Lys-242 contributes to the substrate binding site. Positions 374 and 376 each coordinate Mg(2+). The DXDD motif signature appears at 374–377 (DIDD). Residue Lys-461 coordinates substrate.

This sequence belongs to the terpene synthase family. Mg(2+) serves as cofactor.

The protein localises to the plastid. It localises to the chloroplast. The enzyme catalyses (2E,6E,10E)-geranylgeranyl diphosphate = ent-copalyl diphosphate. It participates in secondary metabolite biosynthesis; terpenoid biosynthesis. In terms of biological role, catalyzes the conversion of geranylgeranyl diphosphate to the phytoalexin precursor ent-copalyl diphosphate. The chain is Ent-copalyl diphosphate synthase 2, chloroplastic from Oryza sativa subsp. japonica (Rice).